The chain runs to 343 residues: Anthranilate phosphoribosyltransferase (343 aa).

5-phospho-alpha-D-ribose 1-diphosphate is bound by residues G78, G81–D82, T86, N88–T91, K106–S114, and S118. G78 lines the anthranilate pocket. Residue S90 participates in Mg(2+) binding. Residue N109 participates in anthranilate binding. R164 is an anthranilate binding site. Positions 223 and 224 each coordinate Mg(2+).

Belongs to the anthranilate phosphoribosyltransferase family. Homodimer. Requires Mg(2+) as cofactor.

It catalyses the reaction N-(5-phospho-beta-D-ribosyl)anthranilate + diphosphate = 5-phospho-alpha-D-ribose 1-diphosphate + anthranilate. The protein operates within amino-acid biosynthesis; L-tryptophan biosynthesis; L-tryptophan from chorismate: step 2/5. Functionally, catalyzes the transfer of the phosphoribosyl group of 5-phosphorylribose-1-pyrophosphate (PRPP) to anthranilate to yield N-(5'-phosphoribosyl)-anthranilate (PRA). The sequence is that of Anthranilate phosphoribosyltransferase from Chlamydia felis (strain Fe/C-56) (Chlamydophila felis).